A 694-amino-acid chain; its full sequence is Voltage-gated chloride channel TMC4 (694 aa).

The tract at residues 1 to 21 is disordered; it reads MEAWGQSPACSSSRKARTGPS. Over 1–150 the chain is Extracellular; it reads MEAWGQSPAC…GTESYFSLLR (150 aa). The chain crosses the membrane as a helical span at residues 151 to 171; the sequence is FLLFLNLVASVIEICMKLIPT. At 172–231 the chain is on the cytoplasmic side; sequence WLEGAPPGPPGPNISSPCGSYIPHTHGLVAFPTQLFNLLSGEGYLEWSPLFYGFYPPRSN. The helical transmembrane segment at 232 to 252 threads the bilayer; the sequence is LAITYLCSVFAISVIYLLCIL. Over 253-330 the chain is Extracellular; the sequence is RRSVSGLKET…SQRAKVWSMR (78 aa). Residues 331-351 traverse the membrane as a helical segment; that stretch reads ALLNVLVLALLGAAFYGIYWA. Topologically, residues 352–376 are cytoplasmic; sequence TEYTLTLQETPLVRQTPLFKLLVDY. The chain crosses the membrane as a helical span at residues 377–397; sequence LPSIFISLFNFVLPPVFKFIA. Residues 398 to 407 are Extracellular-facing; it reads SLEGYTQSRQ. The chain crosses the membrane as a helical span at residues 408 to 428; that stretch reads IVLILLRTVFLRLASLVFLLV. The Cytoplasmic segment spans residues 429–465; it reads SLWSQITCGGNMEAEGCKACGYNYKEIPCWETRLGQE. The helical transmembrane segment at 466–486 threads the bilayer; it reads MYKLVLFDLLMGLLVTLLVQF. Residues 487–513 are Extracellular-facing; that stretch reads PRKILCGLCPGALGRLSGTLEFQVPDE. The helical transmembrane segment at 514 to 534 threads the bilayer; the sequence is VLGLIYAQTVVWVGSFFCPLL. Position 535 (P535) is a topological domain, cytoplasmic. The chain crosses the membrane as a helical span at residues 536–556; it reads LINTAKFLILFCLKKITLFSI. The Extracellular portion of the chain corresponds to 557–574; that stretch reads YSPASRTFRASTANFFFP. The helical transmembrane segment at 575 to 595 threads the bilayer; that stretch reads LVLLVGLAISAVPVLYSIFLI. At 596–635 the chain is on the cytoplasmic side; sequence PPSKLCGPFRGKLSIWAQIPEAIESLPQTAQNFLYFLGTQ. The helical transmembrane segment at 636–656 threads the bilayer; the sequence is AFTVPLLILSSILMMYTVALA. The Extracellular segment spans residues 657-694; that stretch reads NCYGRLISELKRQIETEVQNKVFLAQRAVALSSRNGTS. A glycan (N-linked (GlcNAc...) asparagine) is linked at N691.

The protein belongs to the TMC family. In terms of tissue distribution, expressed in taste bud cells of the posterior tongue. Ubiquitously expressed.

Its subcellular location is the membrane. The catalysed reaction is chloride(in) = chloride(out). In terms of biological role, voltage-gated chloride channel involved in high-concentration salt taste sensation. Depolarization induced by high NaCl concentration may trigger the activation of TMC4-mediated chloride influx into taste bud cells, helping the return to resting potential. Also allows permeation of organic anions including gluconate, but their current amplitudes at positive potentials are less than that of chloride. Involved in pH and temperature-dependent modulation of salty taste. The sequence is that of Voltage-gated chloride channel TMC4 from Mus musculus (Mouse).